Consider the following 751-residue polypeptide: Polyribonucleotide nucleotidyltransferase (751 aa).

Mg(2+)-binding residues include Asp528 and Asp534. Positions Pro594 to Ile653 constitute a KH domain. The S1 motif domain occupies Gly665 to Val737.

This sequence belongs to the polyribonucleotide nucleotidyltransferase family. It depends on Mg(2+) as a cofactor.

Its subcellular location is the cytoplasm. It carries out the reaction RNA(n+1) + phosphate = RNA(n) + a ribonucleoside 5'-diphosphate. Its function is as follows. Involved in mRNA degradation. Catalyzes the phosphorolysis of single-stranded polyribonucleotides processively in the 3'- to 5'-direction. The sequence is that of Polyribonucleotide nucleotidyltransferase from Kocuria rhizophila (strain ATCC 9341 / DSM 348 / NBRC 103217 / DC2201).